The primary structure comprises 149 residues: Transcriptional repressor NrdR (149 aa).

A zinc finger spans residues 3 to 34; sequence CPYCSYEESKVVDSRSAEDYNAIRRRRECLRC. The ATP-cone domain maps to 49–139; it reads ILVIKKDLSR…VYRQFKDINT (91 aa).

Belongs to the NrdR family. Zn(2+) is required as a cofactor.

Functionally, negatively regulates transcription of bacterial ribonucleotide reductase nrd genes and operons by binding to NrdR-boxes. This is Transcriptional repressor NrdR from Clostridium perfringens (strain ATCC 13124 / DSM 756 / JCM 1290 / NCIMB 6125 / NCTC 8237 / Type A).